A 132-amino-acid chain; its full sequence is uncharacterized protein (132 aa).

Residues 107-132 form a disordered region; sequence LNTFSGSGQKHSQPGSGQHPFSFRKD. Over residues 108–122 the composition is skewed to polar residues; it reads NTFSGSGQKHSQPGS.

This is an uncharacterized protein from Bacillus subtilis (strain 168).